A 400-amino-acid polypeptide reads, in one-letter code: uncharacterized protein (400 aa).

Positions Ser-112–Leu-126 are enriched in basic and acidic residues. Residues Ser-112–Lys-151 are disordered.

This is an uncharacterized protein from Homo sapiens (Human).